Consider the following 349-residue polypeptide: Cell adhesion molecule CEACAM8 (349 aa).

The first 34 residues, 1-34, serve as a signal peptide directing secretion; the sequence is MGPISAPSCRWRIPWQGLLLTASLFTFWNPPTTA. An Ig-like V-type domain is found at 35-142; it reads QLTIEAVPSN…EVTGQFSVHP (108 aa). Residues Asn104, Asn111, Asn115, Asn152, Asn173, Asn197, Asn224, Asn256, Asn274, Asn288, and Asn309 are each glycosylated (N-linked (GlcNAc...) asparagine). 2 Ig-like C2-type domains span residues 145–232 and 237–319; these read PKPS…VTLN and PDAP…ITVS. A disulfide bridge connects residues Cys167 and Cys215. Cys259 and Cys299 are joined by a disulfide. Asp320 is lipidated: GPI-anchor amidated aspartate. A propeptide spans 321–349 (removed in mature form); sequence ALVQGSSPGLSARATVSIMIGVLARVALI.

Belongs to the immunoglobulin superfamily. CEA family. Monomer. Heterodimer with CEACAM6; heterodimerizes via its Ig-like V-type domain. Post-translationally, glycosylated. In terms of tissue distribution, expressed in leukocytes of chronic myeloid Leukemia patients and bone marrow.

The protein localises to the cell membrane. It localises to the cell surface. Cell surface glycoprotein that plays a role in cell adhesion in a calcium-independent manner. Mediates heterophilic cell adhesion with other carcinoembryonic antigen-related cell adhesion molecules, such as CEACAM6. Heterophilic interaction with CEACAM8 occurs in activated neutrophils. This Homo sapiens (Human) protein is Cell adhesion molecule CEACAM8.